The following is a 392-amino-acid chain: MDKRSVRDLELRGKKVLVRVDFNVPVKGGEVTDDTRIRRALPTIRYLLQRGARVALISHLGRPKGEPDPRYRMDPVARRLEELLGEPVRKLDTATGPEVGRALEELERGVILLENSRFYPGETKNDPAFAAELAGPFDLYVNDAFGAAHRAHATTVGVAERLPAAAGFLLEQELDYLDGVLRSPERPFVAILGGAKVSDKLGVIESLLGVADRLLVGGAMCFTFLKARGLGVGASLVEDDYLGEARRLMEGAADRLVLPVDVVVAERMEEGARTRTVPVEEIPEGWMGLDIGPRTVELFRRHILQARTIFWNGPMGVFEIDAFARGTEGVARAVAESGATSVVGGGDSVAAVRKLGLEDRMSHISTGGGASLEYVEGRELPGVAVLPEREEV.

Substrate contacts are provided by residues 21–23, R36, 59–62, R117, and R150; these read DFN and HLGR. ATP-binding positions include K200, G288, E319, and 345-348; that span reads GGDS.

This sequence belongs to the phosphoglycerate kinase family. As to quaternary structure, monomer.

It is found in the cytoplasm. It carries out the reaction (2R)-3-phosphoglycerate + ATP = (2R)-3-phospho-glyceroyl phosphate + ADP. The protein operates within carbohydrate degradation; glycolysis; pyruvate from D-glyceraldehyde 3-phosphate: step 2/5. The protein is Phosphoglycerate kinase of Rubrobacter xylanophilus (strain DSM 9941 / JCM 11954 / NBRC 16129 / PRD-1).